The chain runs to 122 residues: Ferredoxin (122 aa).

Residues 1–33 (MSHDRRLTVGSLLPNQPRPVAVPKAPSVVQPSK) form a disordered region. The targeting peptide stretch occupies residues 8-14 (TVGSLLP). One can recognise a 2Fe-2S ferredoxin-type domain in the interval 40–122 (AIIRLEQNGR…FRLACQANME (83 aa)). Cys75, Cys80, Cys83, and Cys117 together coordinate [2Fe-2S] cluster.

The protein belongs to the 2Fe2S plant-type ferredoxin family. [2Fe-2S] cluster is required as a cofactor.

Its subcellular location is the encapsulin nanocompartment. Its function is as follows. Cargo protein of a type 1 encapsulin nanocompartment. An iron-binding protein probably involved in iron mineralization in the encapsulin nanocompartment. 2 different cargo proteins have been identified (IMEF and Fer); when both are expressed in E.coli with the shell protein only IMEF is detected within the nanocompartment. E.coli expressing all 3 genes stores the largest amount of iron and is protected from Fe/H2O2-induced oxidative stress. The sequence is that of Ferredoxin from Bacillus thermotolerans (Quasibacillus thermotolerans).